Consider the following 329-residue polypeptide: Transaldolase (329 aa).

Residue lysine 136 is the Schiff-base intermediate with substrate of the active site.

This sequence belongs to the transaldolase family. Type 1 subfamily. As to quaternary structure, homodimer.

It is found in the cytoplasm. The enzyme catalyses D-sedoheptulose 7-phosphate + D-glyceraldehyde 3-phosphate = D-erythrose 4-phosphate + beta-D-fructose 6-phosphate. It functions in the pathway carbohydrate degradation; pentose phosphate pathway; D-glyceraldehyde 3-phosphate and beta-D-fructose 6-phosphate from D-ribose 5-phosphate and D-xylulose 5-phosphate (non-oxidative stage): step 2/3. Its function is as follows. Transaldolase is important for the balance of metabolites in the pentose-phosphate pathway. This is Transaldolase from Methylococcus capsulatus (strain ATCC 33009 / NCIMB 11132 / Bath).